The following is a 375-amino-acid chain: Growth/differentiation factor 8 (375 aa).

The N-terminal stretch at 1–23 is a signal peptide; that stretch reads MQKLQLCVYIYLFMLIVAGPVDL. Residues 24–266 constitute a propeptide that is removed on maturation; that stretch reads NENSEQKENV…VTDTPKRSRR (243 aa). Asn-71 carries N-linked (GlcNAc...) asparagine glycosylation. Cystine bridges form between Cys-272–Cys-282, Cys-281–Cys-340, Cys-309–Cys-372, and Cys-313–Cys-374.

It belongs to the TGF-beta family. As to quaternary structure, homodimer; disulfide-linked. Interacts with WFIKKN2, leading to inhibit its activity. Interacts with FSTL3. Post-translationally, synthesized as large precursor molecule that undergoes proteolytic cleavage to generate an N-terminal propeptide and a disulfide linked C-terminal dimer, which is the biologically active molecule. The circulating form consists of a latent complex of the C-terminal dimer and other proteins, including its propeptide, which maintain the C-terminal dimer in a latent, inactive state. Ligand activation requires additional cleavage of the prodomain by a tolloid-like metalloproteinase.

The protein resides in the secreted. Acts specifically as a negative regulator of skeletal muscle growth. In Pan paniscus (Pygmy chimpanzee), this protein is Growth/differentiation factor 8 (MSTN).